We begin with the raw amino-acid sequence, 135 residues long: Large ribosomal subunit protein uL16c (135 aa).

The span at 1 to 17 shows a compositional bias: basic residues; the sequence is MLSPKRTKFRKQHRNRM. A disordered region spans residues 1 to 22; it reads MLSPKRTKFRKQHRNRMNGKAS.

This sequence belongs to the universal ribosomal protein uL16 family. Part of the 50S ribosomal subunit.

It localises to the plastid. It is found in the chloroplast. The polypeptide is Large ribosomal subunit protein uL16c (Gracilaria tenuistipitata (Red alga)).